Consider the following 977-residue polypeptide: MRGARGAWDFLFVLLLLLLVQTGSSQPSVSPGELSLPSIHPAKSELIVSVGDEIRLLCTDPGFVKWTFEILGQLSEKTNPEWITEKAEATNTGNYTCTNKGGLSSSIYVFVRDPEKLFLIDLPLYGKEENDTLVRCPLTDPEVTNYSLTGCEGKPLPKDLTFVADPKAGITIRNVKREYHRLCLHCSANQRGKSMLSKKFTLKVRAAIKAVPVVSVSKTSYLLREGEEFAVTCLIKDVSSSVDSMWIKENSQQTKAQTKKNSWHQGDFSYLRQERLTISSARVNDSGVFMCYANNTFGSANVTTTLEVVDKGFINIFPMMNTTVFVNDGENVDLVVEYEAYPKPVHRQWIYMNRTSTDKWDDYPKSENESNIRYVNELHLTRLKGTEGGTYTFHVSNSDVNSSVTFNVYVNTKPEILTHDRLVNGMLQCVAAGFPEPTIDWYFCPGTEQRCSVPVGPVDVQIQNSSVSPFGKLVVYSTIDDSTFKHNGTVECRAYNDVGKSSASFNFAFKGNSKEQIHAHTLFTPLLIGFVIAAGLMCIFVMILTYKYLQKPMYEVQWKVVEEINGNNYVYIDPTQLPYDHKWEFPRNRLSFGKTLGAGAFGKVVEATAYGLIKSDAAMTVAVKMLKPSAHLTEREALMSELKVLSYLGNHMNIVNLLGACTIGGPTLVITEYCCYGDLLNFLRRKRDSFICSKQEDHAEVALYKNLLHSKESSCNDSTNEYMDMKPGVSYVVPTKADKRRSARIGSYIERDVTPAIMEDDELALDLEDLLSFSYQVAKGMAFLASKNCIHRDLAARNILLTHGRITKICDFGLARDIKNDSNYVVKGNARLPVKWMAPESIFNCVYTFESDVWSYGIFLWELFSLGSSPYPGMPVDSKFYKMIKEGFRMLSPEHAPAEMYDIMKTCWDADPLKRPTFKQIVQLIEKQISESTNHIYSNLANCSPHRENPAVDHSVRINSVGSSASSTQPLLVHEDV.

The first 25 residues, 1–25 (MRGARGAWDFLFVLLLLLLVQTGSS), serve as a signal peptide directing secretion. The Extracellular portion of the chain corresponds to 26-525 (QPSVSPGELS…QIHAHTLFTP (500 aa)). 5 consecutive Ig-like C2-type domains span residues 27–112 (PSVS…VFVR), 121–205 (DLPL…LKVR), 212–309 (PVVS…LEVV), 318–411 (PMMN…VYVN), and 414–508 (PEIL…FNFA). C58 and C97 are joined by a disulfide. N94, N130, and N145 each carry an N-linked (GlcNAc...) asparagine glycan. 3 cysteine pairs are disulfide-bonded: C136–C186, C151–C183, and C233–C291. N284, N294, N301, N321, N353, N368, N401, N464, and N487 each carry an N-linked (GlcNAc...) asparagine glycan. A disulfide bridge links C429 with C492. Residues 526–546 (LLIGFVIAAGLMCIFVMILTY) traverse the membrane as a helical segment. The Cytoplasmic portion of the chain corresponds to 547–977 (KYLQKPMYEV…TQPLLVHEDV (431 aa)). Phosphotyrosine occurs at positions 548 and 554. Position 569 (Y569) interacts with Mg(2+). Phosphotyrosine; by autocatalysis occurs at positions 569 and 571. Residues 569-571 (YVY) form an important for interaction with phosphotyrosine-binding proteins region. A Protein kinase domain is found at 590 to 938 (LSFGKTLGAG…ISESTNHIYS (349 aa)). ATP-binding positions include 597–604 (GAGAFGKV), K624, and 672–678 (EYCCYGD). Residues Y704 and Y722 each carry the phosphotyrosine; by autocatalysis modification. At Y731 the chain carries Phosphotyrosine. S742 and S747 each carry phosphoserine; by PKC/PRKCA. D793 serves as the catalytic Proton acceptor. R797 is a binding site for ATP. The Mg(2+) site is built by N798 and D811. S822 is subject to Phosphoserine. Y824 is modified (phosphotyrosine; by autocatalysis). S892 is modified (phosphoserine). At Y901 the chain carries Phosphotyrosine. A Phosphotyrosine; by autocatalysis modification is found at Y937. At S960 the chain carries Phosphoserine.

This sequence belongs to the protein kinase superfamily. Tyr protein kinase family. CSF-1/PDGF receptor subfamily. In terms of assembly, monomer in the absence of bound KITLG/SCF. Homodimer in the presence of bound KITLG/SCF, forming a heterotetramer with two KITLG/SCF molecules. Interacts (via phosphorylated tyrosine residues) with the adapter proteins GRB2 and GRB7 (via SH2 domain), and SH2B2/APS. Interacts (via C-terminus) with MPDZ (via the tenth PDZ domain). Interacts (via phosphorylated tyrosine residues) with PIK3R1 and PIK3CD. Interacts (via phosphorylated tyrosine) with CRK (isoform Crk-II), FYN, SHC1 and MATK/CHK (via SH2 domain). Interacts with LYN and FES/FPS. Interacts (via phosphorylated tyrosine residues) with the protein phosphatases PTPN6/SHP-1 (via SH2 domain), PTPN11/SHP-2 (via SH2 domain) and PTPRU. Interacts with PLCG1. Interacts with DOK1 and TEC. Interacts with IL1RAP (independent of stimulation with KITLG/SCF). A mast cell-specific KITLG/SCF-induced interleukin-33 signaling complex contains IL1RL1, IL1RAP, KIT and MYD88. Post-translationally, ubiquitinated by SOCS6. KIT is rapidly ubiquitinated after autophosphorylation induced by KITLG/SCF binding, leading to internalization and degradation. Autophosphorylated on tyrosine residues. KITLG/SCF binding promotes autophosphorylation. Phosphorylated tyrosine residues are important for interaction with specific binding partners.

Its subcellular location is the cell membrane. The enzyme catalyses L-tyrosyl-[protein] + ATP = O-phospho-L-tyrosyl-[protein] + ADP + H(+). Its activity is regulated as follows. Present in an inactive conformation in the absence of bound ligand. KITLG/SCF binding leads to dimerization and activation by autophosphorylation on tyrosine residues. Activity is down-regulated by PRKCA-mediated phosphorylation on serine residues. Tyrosine-protein kinase that acts as a cell-surface receptor for the cytokine KITLG/SCF and plays an essential role in the regulation of cell survival and proliferation, hematopoiesis, stem cell maintenance, gametogenesis, mast cell development, migration and function, and in melanogenesis. In response to KITLG/SCF binding, KIT can activate several signaling pathways. Phosphorylates PIK3R1, PLCG1, SH2B2/APS and CBL. Activates the AKT1 signaling pathway by phosphorylation of PIK3R1, the regulatory subunit of phosphatidylinositol 3-kinase. Activated KIT also transmits signals via GRB2 and activation of RAS, RAF1 and the MAP kinases MAPK1/ERK2 and/or MAPK3/ERK1. Promotes activation of STAT family members STAT1, STAT3, STAT5A and STAT5B. Activation of PLCG1 leads to the production of the cellular signaling molecules diacylglycerol and inositol 1,4,5-trisphosphate. KIT signaling is modulated by protein phosphatases, and by rapid internalization and degradation of the receptor. Activated KIT promotes phosphorylation of the protein phosphatases PTPN6/SHP-1 and PTPRU, and of the transcription factors STAT1, STAT3, STAT5A and STAT5B. Promotes phosphorylation of PIK3R1, CBL, CRK (isoform Crk-II), LYN, MAPK1/ERK2 and/or MAPK3/ERK1, PLCG1, SRC and SHC1. The protein is Mast/stem cell growth factor receptor Kit (KIT) of Bos taurus (Bovine).